A 123-amino-acid polypeptide reads, in one-letter code: MGKTRIKKGDLVQVITRVRGRRNADGTKTSDLGKQGKVLEVIAETDRVLVEGVNRIKRHTKARPGVEGGIVEREAPIHISNVQLVDPETKKPTRVGIRTEQVERDGRTKTNRIRVAKRSGKDI.

Belongs to the universal ribosomal protein uL24 family. As to quaternary structure, part of the 50S ribosomal subunit.

Functionally, one of two assembly initiator proteins, it binds directly to the 5'-end of the 23S rRNA, where it nucleates assembly of the 50S subunit. In terms of biological role, one of the proteins that surrounds the polypeptide exit tunnel on the outside of the subunit. This is Large ribosomal subunit protein uL24 from Kineococcus radiotolerans (strain ATCC BAA-149 / DSM 14245 / SRS30216).